Consider the following 97-residue polypeptide: Large ribosomal subunit protein bL25 (97 aa).

The protein belongs to the bacterial ribosomal protein bL25 family. Part of the 50S ribosomal subunit; part of the 5S rRNA/L5/L18/L25 subcomplex. Contacts the 5S rRNA. Binds to the 5S rRNA independently of L5 and L18.

In terms of biological role, this is one of the proteins that binds to the 5S RNA in the ribosome where it forms part of the central protuberance. The chain is Large ribosomal subunit protein bL25 from Buchnera aphidicola subsp. Baizongia pistaciae (strain Bp).